Reading from the N-terminus, the 320-residue chain is Beta-sarcoglycan (320 aa).

Residues 1 to 10 (MAAAAAAAAA) are compositionally biased toward low complexity. The disordered stretch occupies residues 1-34 (MAAAAAAAAATEQQGSNGPVKKSMREKAVERRNV). At 1–67 (MAAAAAAAAA…GLRGRKGNLA (67 aa)) the chain is on the cytoplasmic side. Positions 23–34 (SMREKAVERRNV) are enriched in basic and acidic residues. The helical; Signal-anchor for type II membrane protein transmembrane segment at 68–88 (ICVIVLLFILAVINLLITLVI) threads the bilayer. Topologically, residues 89–320 (WAVIRIGPNG…VSDNPCGNTH (232 aa)) are extracellular. N-linked (GlcNAc...) asparagine glycosylation is found at Asn160, Asn213, and Asn260. Intrachain disulfides connect Cys290-Cys316 and Cys292-Cys309.

Belongs to the sarcoglycan beta/delta/gamma/zeta family. In terms of assembly, cross-link to form 2 major subcomplexes: one consisting of SGCB, SGCD and SGCG and the other consisting of SGCB and SGCD. The association between SGCB and SGCG is particularly strong while SGCA is loosely associated with the other sarcoglycans. In terms of processing, disulfide bonds are present. In terms of tissue distribution, most strongly expressed in skeletal and heart muscle. Also detected in proliferating myoblasts.

It is found in the cell membrane. It localises to the sarcolemma. Its subcellular location is the cytoplasm. The protein resides in the cytoskeleton. Its function is as follows. Component of the sarcoglycan complex, a subcomplex of the dystrophin-glycoprotein complex which forms a link between the F-actin cytoskeleton and the extracellular matrix. This chain is Beta-sarcoglycan (Sgcb), found in Mus musculus (Mouse).